The following is a 197-amino-acid chain: Sodium/potassium-transporting ATPase subunit beta-1-interacting protein 3 (197 aa).

4 consecutive transmembrane segments (helical) span residues 2–22 (GCCTGRCSLICLCALQLVSAL), 35–55 (APILGNFLHIIVVILGLFGTI), 62–82 (IMVYTVWTALWVTWNVFIICF), and 152–172 (VQILLSLVGFVYACYVISISM).

The protein belongs to the NKAIN family. As to quaternary structure, interacts with ATP1B1.

It localises to the cell membrane. This is Sodium/potassium-transporting ATPase subunit beta-1-interacting protein 3 (NKAIN3) from Homo sapiens (Human).